Consider the following 252-residue polypeptide: Aspartate/glutamate leucyltransferase (252 aa).

Belongs to the R-transferase family. Bpt subfamily.

Its subcellular location is the cytoplasm. The enzyme catalyses N-terminal L-glutamyl-[protein] + L-leucyl-tRNA(Leu) = N-terminal L-leucyl-L-glutamyl-[protein] + tRNA(Leu) + H(+). It carries out the reaction N-terminal L-aspartyl-[protein] + L-leucyl-tRNA(Leu) = N-terminal L-leucyl-L-aspartyl-[protein] + tRNA(Leu) + H(+). Functionally, functions in the N-end rule pathway of protein degradation where it conjugates Leu from its aminoacyl-tRNA to the N-termini of proteins containing an N-terminal aspartate or glutamate. The chain is Aspartate/glutamate leucyltransferase from Agrobacterium fabrum (strain C58 / ATCC 33970) (Agrobacterium tumefaciens (strain C58)).